We begin with the raw amino-acid sequence, 200 residues long: Large ribosomal subunit protein uL4 (200 aa).

Positions 42 to 65 are disordered; the sequence is TRAQKTRSEVSGGGAKPWRQKGTG.

This sequence belongs to the universal ribosomal protein uL4 family. In terms of assembly, part of the 50S ribosomal subunit.

One of the primary rRNA binding proteins, this protein initially binds near the 5'-end of the 23S rRNA. It is important during the early stages of 50S assembly. It makes multiple contacts with different domains of the 23S rRNA in the assembled 50S subunit and ribosome. Functionally, forms part of the polypeptide exit tunnel. This Vibrio cholerae serotype O1 (strain ATCC 39541 / Classical Ogawa 395 / O395) protein is Large ribosomal subunit protein uL4.